The sequence spans 425 residues: MASKEMFEDTVEERVINEEYKIWKKNTPFLYDLVMTHALQWPSLTVQWLPEVTKPEGKDYALHWLVLGTHTSDEQNHLVVARVHIPNDDAQFDASHCDSEKGEFGGFGSVTGKIECEIKINHEGEVNRARYMPQNPHIIATKTPSSDVLVFDYTKHPAKPDPSGECNPDLRLRGHQKEGYGLSWNSNLSGHLLSASDDHTVCLWDINAGPKEGKIVDAKAIFTGHSAVVEDVAWHLLHESLFGSVADDQKLMIWDTRSNTTSKPSHLVDAHTAEVNCLSFNPYSEFILATGSADKTVALWDLRNLKLKLHTFESHKDEIFQVHWSPHNETILASSGTDRRLNVWDLSKIGEEQSAEDAEDGPPELLFIHGGHTAKISDFSWNPNEPWVICSVSEDNIMQIWQMAENIYNDEESDVTTPELEGQGS.

A2 carries the post-translational modification N-acetylalanine. Phosphoserine is present on S3. K4 is modified (N6-acetyllysine; alternate). Residue K4 forms a Glycyl lysine isopeptide (Lys-Gly) (interchain with G-Cter in SUMO2); alternate linkage. K4 is covalently cross-linked (Glycyl lysine isopeptide (Lys-Gly) (interchain with G-Cter in ubiquitin); alternate). T10 carries the post-translational modification Phosphothreonine. WD repeat units follow at residues 47–122 (QWLP…KINH), 128–173 (RARY…LRLR), 181–217 (GLSW…KIVD), 228–269 (VVED…HLVD), 275–312 (VNCL…LHTF), 318–369 (EIFQ…LFIH), and 376–403 (ISDF…IWQM). At S95 the chain carries Phosphoserine. Residue K101 forms a Glycyl lysine isopeptide (Lys-Gly) (interchain with G-Cter in SUMO2) linkage. K119 is modified (N6-acetyllysine). Residue K155 forms a Glycyl lysine isopeptide (Lys-Gly) (interchain with G-Cter in SUMO2) linkage. At K159 the chain carries N6-acetyllysine; alternate. K159 participates in a covalent cross-link: Glycyl lysine isopeptide (Lys-Gly) (interchain with G-Cter in SUMO2); alternate. S354 carries the phosphoserine modification.

The protein belongs to the WD repeat RBAP46/RBAP48/MSI1 family. Binds directly to helix 1 of the histone fold of histone H4, a region that is not accessible when H4 is in chromatin. Subunit of the type B histone acetyltransferase (HAT) complex, composed of RBBP7 and HAT1. Subunit of the core histone deacetylase (HDAC) complex, which is composed of HDAC1, HDAC2, RBBP4 and RBBP7. The core HDAC complex associates with SIN3A, ARID4B/SAP180, SAP18, SAP30, SAP130, SUDS3/SAP45 and possibly ARID4A/RBP1 and ING1 to form the SIN3 HDAC complex. Component of the nucleosome remodeling and deacetylase (NuRD) repressor complex, composed of core proteins MTA1, MTA2, MTA3, RBBP4, RBBP7, HDAC1, HDAC2, MBD2, MBD3, and peripherally associated proteins CDK2AP1, CDK2AP2, GATAD2A, GATAD2B, CHD3, CHD4 and CHD5. The exact stoichiometry of the NuRD complex is unknown, and some subunits such as MBD2 and MBD3, GATAD2A and GATAD2B, and CHD3, CHD4 and CHD5 define mutually exclusive NuRD complexes. The NuRD complex may interact with MBD3L1. The NuRD complex may interact with MBD3L2. Subunit of the PRC2/EED-EZH2 complex, which is composed of at least EED, EZH2, RBBP4, RBBP7 and SUZ12. The PRC2/EED-EZH2 complex may also associate with HDAC1. Component of the NURF-1 ISWI chromatin remodeling complex (also called the nucleosome-remodeling factor (NURF) complex) at least composed of SMARCA1, BPTF, RBBP4 and RBBP7. Within the complex interacts with SMARCA1. Component of the BPFT-SMARCA1 complex at least composed of SMARCA1, BPFT, RBBP4 and RBBP7; the complex is catalytically inactive and does not remodel chromatin. Within the complex interacts with SMARCA1. Interacts with BRCA1. Interacts with CDK2AP1. Interacts with CENPA. Interacts with CHD3. Interacts with CHD4. Interacts with CREBBP, and this interaction may be enhanced by the binding of phosphorylated CREB1 to CREBBP. Interacts with HDAC7. Interacts with MTA1. Interacts with PWWP2B. Interacts with RB1 (via viral protein-binding domain). Interacts with SUV39H1.

It is found in the nucleus. In terms of biological role, core histone-binding subunit that may target chromatin remodeling factors, histone acetyltransferases and histone deacetylases to their histone substrates in a manner that is regulated by nucleosomal DNA. Component of several complexes which regulate chromatin metabolism. These include the type B histone acetyltransferase (HAT) complex, which is required for chromatin assembly following DNA replication; the core histone deacetylase (HDAC) complex, which promotes histone deacetylation and consequent transcriptional repression; the nucleosome remodeling and histone deacetylase complex (the NuRD complex), which promotes transcriptional repression by histone deacetylation and nucleosome remodeling; and the PRC2/EED-EZH2 complex, which promotes repression of homeotic genes during development; and the NURF (nucleosome remodeling factor) complex. The chain is Histone-binding protein RBBP7 (RBBP7) from Bos taurus (Bovine).